The sequence spans 1327 residues: Putative ATP-dependent RNA helicase ucp12 (1327 aa).

Disordered regions lie at residues 1 to 58 (MGSK…KQLV) and 201 to 222 (QAAR…NEKV). The span at 18-41 (SKNKEKNIKGKKKNSLDPIEKNKQ) shows a compositional bias: basic and acidic residues. The segment covering 42–58 (ETAGLQTTSRPTAKQLV) has biased composition (polar residues). A UBA domain is found at 276 to 315 (EPDTSIVNDLISLGFRDIHAKEACQYCVSLEDALEWLIIH). The 100-residue stretch at 405–504 (DDVSALQSIL…NHLQENIEDF (100 aa)) folds into the RWD domain. In terms of domain architecture, Helicase ATP-binding spans 587–756 (MDAIQHSQVV…FGNAGHLHIH (170 aa)). An ATP-binding site is contributed by 600–607 (GETGSGKS). A DEAH box motif is present at residues 703 to 706 (DEVH). The region spanning 797 to 968 (LISRLVSSID…QVCLNVVPLV (172 aa)) is the Helicase C-terminal domain.

This sequence belongs to the DEAD box helicase family. DEAH subfamily.

The protein resides in the cytoplasm. It carries out the reaction ATP + H2O = ADP + phosphate + H(+). Probable ATP-binding RNA helicase. The protein is Putative ATP-dependent RNA helicase ucp12 (ucp12) of Schizosaccharomyces pombe (strain 972 / ATCC 24843) (Fission yeast).